The sequence spans 356 residues: sn-glycerol-3-phosphate import ATP-binding protein UgpC (356 aa).

In terms of domain architecture, ABC transporter spans leucine 4 to isoleucine 235. Residue glycine 37–serine 44 participates in ATP binding.

This sequence belongs to the ABC transporter superfamily. sn-glycerol-3-phosphate importer (TC 3.A.1.1.3) family. In terms of assembly, the complex is composed of two ATP-binding proteins (UgpC), two transmembrane proteins (UgpA and UgpE) and a solute-binding protein (UgpB).

The protein resides in the cell inner membrane. The catalysed reaction is sn-glycerol 3-phosphate(out) + ATP + H2O = sn-glycerol 3-phosphate(in) + ADP + phosphate + H(+). In terms of biological role, part of the ABC transporter complex UgpBAEC involved in sn-glycerol-3-phosphate (G3P) import. Responsible for energy coupling to the transport system. The sequence is that of sn-glycerol-3-phosphate import ATP-binding protein UgpC from Escherichia coli O6:K15:H31 (strain 536 / UPEC).